Reading from the N-terminus, the 270-residue chain is Undecaprenyl-diphosphatase (270 aa).

8 consecutive transmembrane segments (helical) span residues methionine 1–isoleucine 21, glutamine 39–phenylalanine 59, serine 87–cysteine 107, valine 114–tryptophan 134, alanine 147–glycine 167, phenylalanine 193–alanine 213, phenylalanine 223–leucine 243, and threonine 250–glycine 270.

The protein belongs to the UppP family.

It is found in the cell inner membrane. It catalyses the reaction di-trans,octa-cis-undecaprenyl diphosphate + H2O = di-trans,octa-cis-undecaprenyl phosphate + phosphate + H(+). Its function is as follows. Catalyzes the dephosphorylation of undecaprenyl diphosphate (UPP). Confers resistance to bacitracin. The chain is Undecaprenyl-diphosphatase from Magnetococcus marinus (strain ATCC BAA-1437 / JCM 17883 / MC-1).